We begin with the raw amino-acid sequence, 464 residues long: E3 ubiquitin-protein ligase MYLIP-B (464 aa).

Residues 1-279 enclose the FERM domain; that stretch reads MLCHITRPDS…EIHAFYRCDT (279 aa). The RING-type zinc finger occupies 381 to 416; that stretch reads CALCCEQEISAAFCPCGHMFCCYNCASQLQCCPVCR.

In terms of assembly, interacts with anxa5.

It localises to the cytoplasm. The protein localises to the cytosol. The enzyme catalyses S-ubiquitinyl-[E2 ubiquitin-conjugating enzyme]-L-cysteine + [acceptor protein]-L-lysine = [E2 ubiquitin-conjugating enzyme]-L-cysteine + N(6)-ubiquitinyl-[acceptor protein]-L-lysine.. It functions in the pathway protein modification; protein ubiquitination. In terms of biological role, E3 ubiquitin-protein ligase that mediates ubiquitination and subsequent proteasomal degradation of myosin regulatory light chain (MRLC). Regulates cell movements during gastrulation by acting downstream of fz7 to antagonize the frizzled-signaling pathway. The sequence is that of E3 ubiquitin-protein ligase MYLIP-B from Danio rerio (Zebrafish).